The sequence spans 108 residues: uncharacterized protein (108 aa).

A helical transmembrane segment spans residues 72–94 (LGLHTSVFFFLRIVCMSSAASVF).

Its subcellular location is the membrane. This is an uncharacterized protein from Saccharomyces cerevisiae (strain ATCC 204508 / S288c) (Baker's yeast).